The primary structure comprises 446 residues: tRNA-2-methylthio-N(6)-dimethylallyladenosine synthase (446 aa).

The MTTase N-terminal domain maps to 3–120; that stretch reads KKLFIETHGC…LPEMIDAARS (118 aa). The [4Fe-4S] cluster site is built by Cys12, Cys49, Cys83, Cys157, Cys161, and Cys164. One can recognise a Radical SAM core domain in the interval 143–375; sequence RVDGPTAFVS…QSRIHQQGYE (233 aa). One can recognise a TRAM domain in the interval 378–442; the sequence is RRMVGSTQRI…PHSLRGTLID (65 aa).

This sequence belongs to the methylthiotransferase family. MiaB subfamily. As to quaternary structure, monomer. It depends on [4Fe-4S] cluster as a cofactor.

It is found in the cytoplasm. The catalysed reaction is N(6)-dimethylallyladenosine(37) in tRNA + (sulfur carrier)-SH + AH2 + 2 S-adenosyl-L-methionine = 2-methylsulfanyl-N(6)-dimethylallyladenosine(37) in tRNA + (sulfur carrier)-H + 5'-deoxyadenosine + L-methionine + A + S-adenosyl-L-homocysteine + 2 H(+). In terms of biological role, catalyzes the methylthiolation of N6-(dimethylallyl)adenosine (i(6)A), leading to the formation of 2-methylthio-N6-(dimethylallyl)adenosine (ms(2)i(6)A) at position 37 in tRNAs that read codons beginning with uridine. In Pseudomonas aeruginosa (strain UCBPP-PA14), this protein is tRNA-2-methylthio-N(6)-dimethylallyladenosine synthase.